Consider the following 453-residue polypeptide: tRNA modification GTPase MnmE (453 aa).

(6S)-5-formyl-5,6,7,8-tetrahydrofolate is bound by residues arginine 22, glutamate 79, and lysine 119. The TrmE-type G domain occupies 215-376 (GMKVVIAGRP…LREHLKACMG (162 aa)). Asparagine 225 lines the K(+) pocket. GTP is bound by residues 225 to 230 (NAGKSS), 244 to 250 (TEIAGTT), 269 to 272 (DTAG), and 334 to 337 (NKAD). A Mg(2+)-binding site is contributed by serine 229. K(+) is bound by residues threonine 244, isoleucine 246, and threonine 249. Threonine 250 contacts Mg(2+). Lysine 453 lines the (6S)-5-formyl-5,6,7,8-tetrahydrofolate pocket.

The protein belongs to the TRAFAC class TrmE-Era-EngA-EngB-Septin-like GTPase superfamily. TrmE GTPase family. In terms of assembly, homodimer. Heterotetramer of two MnmE and two MnmG subunits. The cofactor is K(+).

The protein resides in the cytoplasm. Exhibits a very high intrinsic GTPase hydrolysis rate. Involved in the addition of a carboxymethylaminomethyl (cmnm) group at the wobble position (U34) of certain tRNAs, forming tRNA-cmnm(5)s(2)U34. The chain is tRNA modification GTPase MnmE from Aeromonas salmonicida (strain A449).